The chain runs to 236 residues: Lipoprotein NlpE (236 aa).

An N-terminal signal peptide occupies residues 1–20; sequence MVKKAIVTAMAVISLFTLMG. A lipid anchor (N-palmitoyl cysteine) is attached at Cys21. Cys21 carries the S-diacylglycerol cysteine lipid modification. Positions 21–100 are N-terminal domain; that stretch reads CNNRAEVDTL…WARTADKLVL (80 aa). The Periplasmic segment spans residues 21 to 236; the sequence is CNNRAEVDTL…PNQDCSSLGQ (216 aa). The short motif at 51–54 is the CXXC element; sequence CADC. Positions 126 to 236 are C-terminal domain; sequence PIESQFNYTL…PNQDCSSLGQ (111 aa). Residues 144–156 are could contain a copper-binding motif; sequence MTPMTLRGMYFYM. The cysteines at positions 165 and 231 are disulfide-linked.

Probably exists as a monomer in vivo, can however form homodimers which swap domains. Post-translationally, palmitoylated. In terms of processing, seems to only form a disulfide bond between Cys-165 and Cys-231. The 2 other cysteine residues may however be chemically active.

It is found in the cell outer membrane. Functionally, involved in copper homeostasis, could be involved in both copper efflux and the delivery of copper to copper-dependent enzymes. Required for efficient binding of stationary phase cells to hydrophobic surfaces, part of the process of biofilm formation. Functions during envelope stress responses; when overproduced induces degP through the activation of the two-component envelope stress response system CpxA/CpxR. DegP induction seems to require membrane anchoring of this protein. Structural changes and/or interaction of the CXXC motif with its environment may lead to activation of the Cpx stress response. The polypeptide is Lipoprotein NlpE (Escherichia coli (strain K12)).